The sequence spans 96 residues: Small ribosomal subunit protein bS6 (96 aa).

This sequence belongs to the bacterial ribosomal protein bS6 family.

Functionally, binds together with bS18 to 16S ribosomal RNA. The chain is Small ribosomal subunit protein bS6 (rpsF) from Mycobacterium leprae (strain TN).